A 434-amino-acid polypeptide reads, in one-letter code: Cyclic 2,3-diphosphoglycerate synthetase (434 aa).

It belongs to the cyclic 2,3-diphosphoglycerate synthetase family.

It localises to the cytoplasm. It catalyses the reaction (2R)-2,3-bisphosphoglycerate + ATP + H(+) = cyclic (2R)-2,3-bisphosphoglycerate + ADP + phosphate. In terms of biological role, catalyzes the formation of cyclic 2,3-diphosphoglycerate (cDPG) by formation of an intramolecular phosphoanhydride bond at the expense of ATP. This chain is Cyclic 2,3-diphosphoglycerate synthetase, found in Thermococcus sibiricus (strain DSM 12597 / MM 739).